The chain runs to 423 residues: 26S proteasome regulatory subunit 6A-A (423 aa).

211–218 (GPPGTGKT) contributes to the ATP binding site.

This sequence belongs to the AAA ATPase family. May form a heterodimer with a related family member.

The protein resides in the cytoplasm. Its subcellular location is the nucleus. Functionally, the 26S proteasome is involved in the ATP-dependent degradation of ubiquitinated proteins. The regulatory (or ATPase) complex confers ATP dependency and substrate specificity to the 26S complex. The polypeptide is 26S proteasome regulatory subunit 6A-A (Xenopus laevis (African clawed frog)).